The following is a 301-amino-acid chain: Rhodopsin (301 aa).

The Extracellular portion of the chain corresponds to 1–18 (LHMIHLHWYQYPPMNPMM). Residues 19–43 (YPLLLIFMLFTGILCLAGNFVTIWV) form a helical membrane-spanning segment. The Cytoplasmic portion of the chain corresponds to 44–55 (FMNTKSLRTPAN). A helical transmembrane segment spans residues 56–78 (LLVVNLAMSDFLMMFTMFPPMMV). Residues 79–92 (TCYYHTWTLGPTFC) are Extracellular-facing. Cys-92 and Cys-169 are joined by a disulfide. The helical transmembrane segment at 93–115 (QVYAFLGNLCGCASIWTMVFITF) threads the bilayer. The 'Ionic lock' involved in activated form stabilization signature appears at 116-118 (DRY). Topologically, residues 116-134 (DRYNVIVKGVAGEPLSTKK) are cytoplasmic. The helical transmembrane segment at 135 to 155 (ASLWILTIWVLSTTWCIAPFF) threads the bilayer. Residues 156 to 182 (GWNHYVPEGNLTGCGTDYLSEDILSRS) lie on the Extracellular side of the membrane. Residue Asn-165 is glycosylated (N-linked (GlcNAc...) asparagine). The helical transmembrane segment at 183 to 204 (YLYVYSTWVYFLPLAITIYCYV) threads the bilayer. Topologically, residues 205 to 245 (FIIKAVAAHEKGMRDQAKKMGIKSLRNEEAQKTSAECRLAK) are cytoplasmic. The helical transmembrane segment at 246-267 (IAMTTVALWFIAWTPCLLINWV) threads the bilayer. Topologically, residues 268-278 (GMFARSYLSPV) are extracellular. The helical transmembrane segment at 279–300 (YTIWGYVFAKANAVYNPIVYAI) threads the bilayer. An N6-(retinylidene)lysine modification is found at Lys-288.

The protein belongs to the G-protein coupled receptor 1 family. Opsin subfamily. As to quaternary structure, homodimer. Interacts with GNAQ. Post-translationally, contains one covalently linked retinal chromophore.

The protein localises to the cell projection. It localises to the rhabdomere membrane. Its function is as follows. Photoreceptor required for image-forming vision at low light intensity. Can use both retinal and 3-dehydroretinal as visual pigment. Light-induced isomerization of 11-cis to all-trans retinal triggers a conformational change that activates signaling via G-proteins. Signaling via GNAQ probably mediates the activation of phospholipase C. This Procambarus seminolae (Crayfish) protein is Rhodopsin (RHO).